The chain runs to 442 residues: Lipoyl synthase, apicoplast (442 aa).

A signal peptide spans 1–23 (MRVLTPSLYIYAFFIFCVRFKCG). The segment at 104–154 (LGEHQLKGKRKESATNVEKEKKEKEQQEERLPVPKVGNKMPEKKPDWFHVP) is disordered. Residues 114–135 (KESATNVEKEKKEKEQQEERLP) are compositionally biased toward basic and acidic residues. 7 residues coordinate [4Fe-4S] cluster: Cys177, Cys182, Cys188, Cys203, Cys207, Cys210, and Ser418. Residues 189–407 (WNIGTATIML…KEEGMKMGFK (219 aa)) form the Radical SAM core domain.

It belongs to the radical SAM superfamily. Lipoyl synthase family. [4Fe-4S] cluster is required as a cofactor.

The protein localises to the plastid. Its subcellular location is the apicoplast. It catalyses the reaction [[Fe-S] cluster scaffold protein carrying a second [4Fe-4S](2+) cluster] + N(6)-octanoyl-L-lysyl-[protein] + 2 oxidized [2Fe-2S]-[ferredoxin] + 2 S-adenosyl-L-methionine + 4 H(+) = [[Fe-S] cluster scaffold protein] + N(6)-[(R)-dihydrolipoyl]-L-lysyl-[protein] + 4 Fe(3+) + 2 hydrogen sulfide + 2 5'-deoxyadenosine + 2 L-methionine + 2 reduced [2Fe-2S]-[ferredoxin]. It functions in the pathway protein modification; protein lipoylation via endogenous pathway; protein N(6)-(lipoyl)lysine from octanoyl-[acyl-carrier-protein]: step 2/2. In terms of biological role, catalyzes the radical-mediated insertion of two sulfur atoms into the C-6 and C-8 positions of the octanoyl moiety bound to the lipoyl domains of lipoate-dependent enzymes, thereby converting the octanoylated domains into lipoylated derivatives. In Plasmodium knowlesi (strain H), this protein is Lipoyl synthase, apicoplast.